We begin with the raw amino-acid sequence, 651 residues long: MGKIIGIDLGTTNSCVAVLEGGNPVVIPNAEGGRTTPSIVAFGKSGERLVGQLAKRQAITNAENTIFSIKRFIGRRWEETAQERARVPYACVPGRDGMVDVQIRDRTYTPQEISAMVLQKLKQDAEAYLGEPVTQAVITVPAYFSDAQRQATKDAGAIAGLEVLRIINEPTAASLAYGIDKQDQDQTILVFDLGGGTFDVSILQLGDGVFEVRSTAGNNHLGGDNFDECIVDWLLACFKEQEGIDLSKDKMALQRLREAAEKAKVELSGTLSTSINLPFITADETGPKHLEMELTRSKFEELCAHLVQATLEPMQQAIADAGLTVEEIDRVLLVGGSTRIPAIQELVKQFCGKNPDRSVNPDEAVAIGAAIQGGILGKETTVKDLLLLDVTPLSLGLETLGGVFTKIIERNTTLPTSKTQTFSTASDGQTVVEIAVYQGERPIAKDNKQLACFELTGIAPAPRGVPQIDVTFDIDANGILSVSAVDRATGRQQSVRITNRGGLSSMEIERMRQEAQIYAQVDQIKKEIAELRNQADALLYSYESTIKNHGITLSPELRARIEPVVQSMQAAMVDDNITPDEIRKRMEALQQALVTLGSVVYQQTAGGSMMTSTPTMGRATMSSQATQVLDSEATIISDNEETVVSDYEAVD.

Residue threonine 197 is modified to Phosphothreonine; by autocatalysis.

It belongs to the heat shock protein 70 family.

Its function is as follows. Acts as a chaperone. This is Chaperone protein dnaK1 (dnaK1) from Thermosynechococcus vestitus (strain NIES-2133 / IAM M-273 / BP-1).